Here is a 94-residue protein sequence, read N- to C-terminus: Small ribosomal subunit protein bS20 (94 aa).

It belongs to the bacterial ribosomal protein bS20 family.

Binds directly to 16S ribosomal RNA. This is Small ribosomal subunit protein bS20 from Symbiobacterium thermophilum (strain DSM 24528 / JCM 14929 / IAM 14863 / T).